A 251-amino-acid polypeptide reads, in one-letter code: 1-(5-phosphoribosyl)-5-[(5-phosphoribosylamino)methylideneamino] imidazole-4-carboxamide isomerase (251 aa).

Residue Asp-7 is the Proton acceptor of the active site. The Proton donor role is filled by Asp-131.

This sequence belongs to the HisA/HisF family.

The protein localises to the cytoplasm. It catalyses the reaction 1-(5-phospho-beta-D-ribosyl)-5-[(5-phospho-beta-D-ribosylamino)methylideneamino]imidazole-4-carboxamide = 5-[(5-phospho-1-deoxy-D-ribulos-1-ylimino)methylamino]-1-(5-phospho-beta-D-ribosyl)imidazole-4-carboxamide. The protein operates within amino-acid biosynthesis; L-histidine biosynthesis; L-histidine from 5-phospho-alpha-D-ribose 1-diphosphate: step 4/9. The polypeptide is 1-(5-phosphoribosyl)-5-[(5-phosphoribosylamino)methylideneamino] imidazole-4-carboxamide isomerase (Blochmanniella floridana).